Consider the following 364-residue polypeptide: Aminomethyltransferase (364 aa).

It belongs to the GcvT family. The glycine cleavage system is composed of four proteins: P, T, L and H.

The enzyme catalyses N(6)-[(R)-S(8)-aminomethyldihydrolipoyl]-L-lysyl-[protein] + (6S)-5,6,7,8-tetrahydrofolate = N(6)-[(R)-dihydrolipoyl]-L-lysyl-[protein] + (6R)-5,10-methylene-5,6,7,8-tetrahydrofolate + NH4(+). Functionally, the glycine cleavage system catalyzes the degradation of glycine. The sequence is that of Aminomethyltransferase from Salmonella paratyphi C (strain RKS4594).